Here is a 454-residue protein sequence, read N- to C-terminus: tRNA modification GTPase MnmE (454 aa).

Residues Arg-23, Glu-86, and Arg-125 each coordinate (6S)-5-formyl-5,6,7,8-tetrahydrofolate. The 156-residue stretch at 221 to 376 folds into the TrmE-type G domain; it reads GLTLAIVGRP…LREQILRMVS (156 aa). Asn-231 serves as a coordination point for K(+). Residues 231–236, 250–256, and 275–278 contribute to the GTP site; these read NVGKSS, TAIPGTT, and DTAG. A Mg(2+)-binding site is contributed by Ser-235. The K(+) site is built by Thr-250, Ile-252, and Thr-255. Residue Thr-256 participates in Mg(2+) binding. Lys-454 is a binding site for (6S)-5-formyl-5,6,7,8-tetrahydrofolate.

This sequence belongs to the TRAFAC class TrmE-Era-EngA-EngB-Septin-like GTPase superfamily. TrmE GTPase family. In terms of assembly, homodimer. Heterotetramer of two MnmE and two MnmG subunits. Requires K(+) as cofactor.

Its subcellular location is the cytoplasm. Functionally, exhibits a very high intrinsic GTPase hydrolysis rate. Involved in the addition of a carboxymethylaminomethyl (cmnm) group at the wobble position (U34) of certain tRNAs, forming tRNA-cmnm(5)s(2)U34. This is tRNA modification GTPase MnmE from Koribacter versatilis (strain Ellin345).